The following is a 134-amino-acid chain: Large ribosomal subunit protein uL22 (134 aa).

This sequence belongs to the universal ribosomal protein uL22 family. Part of the 50S ribosomal subunit.

Its function is as follows. This protein binds specifically to 23S rRNA; its binding is stimulated by other ribosomal proteins, e.g. L4, L17, and L20. It is important during the early stages of 50S assembly. It makes multiple contacts with different domains of the 23S rRNA in the assembled 50S subunit and ribosome. The globular domain of the protein is located near the polypeptide exit tunnel on the outside of the subunit, while an extended beta-hairpin is found that lines the wall of the exit tunnel in the center of the 70S ribosome. The chain is Large ribosomal subunit protein uL22 from Gluconacetobacter diazotrophicus (strain ATCC 49037 / DSM 5601 / CCUG 37298 / CIP 103539 / LMG 7603 / PAl5).